The following is a 266-amino-acid chain: Phage-like element PBSX protein XkdC (266 aa).

ATP is bound at residue 124–131; it reads GQPGSGKT.

The protein to B.subtilis YqaM.

Its function is as follows. May function as a transcriptional antiterminator. This chain is Phage-like element PBSX protein XkdC (xkdC), found in Bacillus subtilis (strain 168).